The following is a 328-amino-acid chain: DNA polymerase III subunit delta' (328 aa).

As to quaternary structure, DNA polymerase III contains a core (composed of alpha, epsilon and theta chains) that associates with a tau subunit. This core dimerizes to form the POLIII' complex. PolIII' associates with the gamma complex (composed of gamma, delta, delta', psi and chi chains) and with the beta chain to form the complete DNA polymerase III complex.

The enzyme catalyses DNA(n) + a 2'-deoxyribonucleoside 5'-triphosphate = DNA(n+1) + diphosphate. DNA polymerase III is a complex, multichain enzyme responsible for most of the replicative synthesis in bacteria. This DNA polymerase also exhibits 3' to 5' exonuclease activity. The sequence is that of DNA polymerase III subunit delta' (holB) from Pseudomonas aeruginosa (strain ATCC 15692 / DSM 22644 / CIP 104116 / JCM 14847 / LMG 12228 / 1C / PRS 101 / PAO1).